We begin with the raw amino-acid sequence, 1218 residues long: MEESQSKQESNTRVAQHGSQQDVDPTFQTKRALEKERSKPRPRPLPRVQLQSLPGWSSTSKDVPLSQLIREMDHESRRCIHRSKKKLDRSEHISQGTIPEIYEKRKETISHTQSMEQKYLFQNFTKLLLLQKCCPGGSEKLVRESWHPCVPEEGGHMIEIQDLFDPNLDTEKKPQLVIIEGAAGIGKSTLARQVKRAWDEGQLYRDRFQHVFFFSCRELAQCKQLSLAELIAQGQEVPTAPTRQILSRPEKLLFILDGIDEPAWVLEDQNPELCVHWSQAQPVHTLLGSLLGKSILPEASLMLTARTTALQKLVPSLGQPHRVEVLGFSEFERKDYFYKYFAKERNTIIDFNLIGSIPVLLTLCEVPWVCWLLCTCLEKQMQQGEVLSLTSQTTTALCLKYLSLTIPGQHLSTQLRTLCSLAAEGICQRRTLFSKSDLCKQGLAEDAIATFLKIGVLQRQPSSLSYSFAHLCLQEFFAAMSYILEDSEEAHGDMGNDRTVETLVERYGRQNLFEAPTVRFLLGLLNTREMREMENIFACKFPWETKLKLLQSIIGEPFCQPCHLGLFHCLYENQEEELLTETMLCFPLTASGPNHMEATVFQTNVKRLVIQTDMELMVVTFCITFSHVRSLRLKGKGQQEYKLTAPAMVLYRWTPISEASWKVLFSNLKCTRNLEELDLSGNPLSYSAVRSLCTALRQPGCRLKTLWLVDCGLTSRCCSFLASMLSAHSRLAELDLRLNDLGDNGVRQLCEGLRNPACNLSILRLDQASLSEQVITELRALETKNPKLFISSTWMSHMTMPTENTDGEESLTSSKQQQQQSGDKHMEPLGTDDDFWGPSGPVSTEVVDRERNLYRVRLPMAGSYHCPSTGLHFVVTRAVTIEIGFCAWSQFLHETPLQHSHMVAGPLFDIKAEHGAVTAVCLPHFVSLQEGKVDSSLFHVAHFQDHGMVLETPARVEPHFAVLENPSFSPMGVLLRMIPAVGHFIPITSITLIYYRLYLEDITFHLYLVPNDCTIRKAIDEEELKFQFVRINKPPPVDALYVGSRYIVSSSKEVEILPKELELCYRSPRESQLFSEIYVGNIGSGINLQLTDKKYMNLIWEALLKPGDLRPALPRMASAPKDAPALLHFVDQHREQLVARVTSVDPLLDKLHGLVLSEEDYETVRAEATNQDKMRKLFRGSRSWSWDCKDHFYQALKETHPHLIMDLLEKSGGVSVRL.

A disordered region spans residues 1–61 (MEESQSKQES…SLPGWSSTSK (61 aa)). Over residues 7-29 (KQESNTRVAQHGSQQDVDPTFQT) the composition is skewed to polar residues. The NACHT domain occupies 175 to 484 (QLVIIEGAAG…EFFAAMSYIL (310 aa)). ATP is bound at residue 181–188 (GAAGIGKS). 3 LRR repeats span residues 343 to 364 (KERN…LTLC), 673 to 693 (NLEE…RSLC), and 730 to 750 (RLAE…RQLC). Over residues 799-815 (TMPTENTDGEESLTSSK) the composition is skewed to polar residues. The segment at 799–842 (TMPTENTDGEESLTSSKQQQQQSGDKHMEPLGTDDDFWGPSGPV) is disordered. A ZU5 region spans residues 835–968 (FWGPSGPVST…HFAVLENPSF (134 aa)). The FIIND domain occupies 835–1118 (FWGPSGPVST…LRPALPRMAS (284 aa)). The UPA stretch occupies residues 969–1118 (SPMGVLLRMI…LRPALPRMAS (150 aa)). The CARD domain maps to 1122–1211 (DAPALLHFVD…HLIMDLLEKS (90 aa)).

Belongs to the NLRP family. In terms of assembly, interacts (via LRR repeats) with BCL2 and BCL2L1 (via the loop between motifs BH4 and BH3). Interacts with NOD2; this interaction is enhanced in the presence of muramyl dipeptide (MDP) and increases IL1B release. Interacts with EIF2AK2/PKR; this interaction requires EIF2AK2 activity, is accompanied by EIF2AK2 autophosphorylation and promotes inflammasome assembly in response to danger-associated signals. Interacts with MEFV; this interaction targets Nlrp1a to degradation by autophagy, hence preventing excessive IL1B- and IL18-mediated inflammation. Interacts with DPP9; leading to inhibit activation of the inflammasome. DPP9 acts via formation of a ternary complex, composed of a DPP9 homodimer, one full-length NLRP1 protein, and one cleaved C-terminus of Nlrp1a (NACHT, LRR and PYD domains-containing protein 1a, C-terminus). Interacts with DPP8; leading to inhibit activation of the inflammasome, probably via formation of a ternary complex with DPP8. Interacts with the C-terminal part of Nlrp1a (NACHT, LRR and PYD domains-containing protein 1a, C-terminus) in absence of pathogens and other damage-associated signals. As to quaternary structure, interacts with the N-terminal part of Nlrp1a (NACHT, LRR and PYD domains-containing protein 1a, N-terminus) in absence of pathogens and other damage-associated signals. Homomultimer; forms the Nlrp1a inflammasome polymeric complex, a filament composed of homopolymers of this form in response to pathogens and other damage-associated signals. The Nlrp1a inflammasome polymeric complex directly recruits pro-caspase-1 (proCASP1) independently of PYCARD/ASC. Interacts (via CARD domain) with CASP1 (via CARD domain); leading to CASP1 activation. In terms of processing, autocatalytically cleaved. Autocatalytic cleavage in FIIND region occurs constitutively, prior to activation signals, and is required for inflammasome activity (IL1B release), possibly by facilitating CASP1 binding. Both N- and C-terminal parts remain associated non-covalently. (Microbial infection) Cleavage by B.anthracis lethal toxin (LT) endopeptidase promotes ubiquitination and degradation of the N-terminal part, releasing the cleaved C-terminal part of the protein (NACHT, LRR and PYD domains-containing protein 1a, C-terminus), which polymerizes and forms the Nlrp1a inflammasome. Post-translationally, ubiquitinated in response to pathogen-associated signals, leading to its degradation by the proteasome and subsequent release of the cleaved C-terminal part of the protein (NACHT, LRR and PYD domains-containing protein 1a, C-terminus), which polymerizes and forms the Nlrp1a inflammasome.

It localises to the cytoplasm. Its subcellular location is the cytosol. The protein resides in the nucleus. It is found in the inflammasome. With respect to regulation, activated by cleavage by B.anthracis lethal toxin (LT) endopeptidase. Cleavage by LT promotes ubiquitination and degradation of the N-terminal part, releasing the cleaved C-terminal part of the protein (NACHT, LRR and PYD domains-containing protein 1a, C-terminus), which polymerizes and forms the Nlrp1a inflammasome. Nlrp1a inflammasome is inhibited by DPP8 and DPP9, which sequester the C-terminal fragment of Nlrp1a (NACHT, LRR and PYD domains-containing protein 1a, C-terminus) in a ternary complex, thereby preventing Nlrp1a oligomerization and activation. Nlrp1a inflammasome is weakly activated by Val-boroPro (Talabostat, PT-100), an inhibitor of dipeptidyl peptidases DPP8 and DPP9. Val-boroPro relieves inhibition of DPP8 and/or DPP9 by promoting disruption of the ternary complex, releasing its C-terminal part from autoinhibition. Weakly activated by Toxoplasma gondii. Its function is as follows. Acts as the sensor component of the Nlrp1a inflammasome, which mediates inflammasome activation in response to various pathogen-associated signals, leading to subsequent pyroptosis. Inflammasomes are supramolecular complexes that assemble in the cytosol in response to pathogens and other damage-associated signals and play critical roles in innate immunity and inflammation. Acts as a recognition receptor (PRR): recognizes specific pathogens and other damage-associated signals, such as B.anthracis lethal toxin (LT) or Val-boroPro inhibitor, and mediates the formation of the inflammasome polymeric complex. In response to pathogen-associated signals, the N-terminal part of Nlrp1a is degraded by the proteasome, releasing the cleaved C-terminal part of the protein (NACHT, LRR and PYD domains-containing protein 1a, C-terminus), which polymerizes to initiate the formation of the inflammasome complex: the inflammasome directly recruits pro-caspase-1 (proCASP1) independently of PYCARD/ASC and promotes caspase-1 (CASP1) activation, which subsequently cleaves and activates inflammatory cytokines IL1B and IL18 and gasdermin-D (GSDMD), leading to pyroptosis. In the absence of GSDMD expression, the Nlrp1a inflammasome is able to recruit and activate CASP8, leading to activation of gasdermin-E (GSDME). Constitutes the precursor of the Nlrp1a inflammasome, which mediates autoproteolytic processing within the FIIND domain to generate the N-terminal and C-terminal parts, which are associated non-covalently in absence of pathogens and other damage-associated signals. In terms of biological role, regulatory part that prevents formation of the Nlrp1a inflammasome: in absence of pathogens and other damage-associated signals, interacts with the C-terminal part of Nlrp1a (NACHT, LRR and PYD domains-containing protein 1a, C-terminus), preventing activation of the Nlrp1a inflammasome. In response to pathogen-associated signals, this part is ubiquitinated by the N-end rule pathway and degraded by the proteasome, releasing the cleaved C-terminal part of the protein, which polymerizes and forms the Nlrp1a inflammasome. Functionally, constitutes the active part of the Nlrp1a inflammasome. In absence of pathogens and other damage-associated signals, interacts with the N-terminal part of Nlrp1a (NACHT, LRR and PYD domains-containing protein 1a, N-terminus), preventing activation of the Nlrp1a inflammasome. In response to pathogen-associated signals, the N-terminal part of Nlrp1a is degraded by the proteasome, releasing this form, which polymerizes to form the Nlrp1a inflammasome complex: the Nlrp1a inflammasome complex then directly recruits pro-caspase-1 (proCASP1) and promotes caspase-1 (CASP1) activation, leading to gasdermin-D (GSDMD) cleavage and subsequent pyroptosis. This chain is NACHT, LRR and PYD domains-containing protein 1 allele 2, found in Rattus norvegicus (Rat).